We begin with the raw amino-acid sequence, 244 residues long: MANKGPRKHLKRLPAPKNWQISRKTNKYTTRPSAGPHAMGSSLPLLLVLRDLLGYADNAREAKKVIKMGKVLVDGVKRKDHRYPTGLMDVISLPDANESFLVVLDEKGRIKLNKIKDNTKKLCKIENKTVIKGGHIQLNLHDGRNQIVKLADATKAEEDIYKTGDCVILSIPEQSIVGHVQFGEGKLAYITGGKHVGDFAKIIGIEKKQLYPDIITLETENGEQFKTIRDYVFIVGDDKPVISM.

Residues 1–14 show a composition bias toward basic residues; sequence MANKGPRKHLKRLP. The disordered stretch occupies residues 1 to 36; that stretch reads MANKGPRKHLKRLPAPKNWQISRKTNKYTTRPSAGP. Residues 19-32 are compositionally biased toward polar residues; that stretch reads WQISRKTNKYTTRP. The 64-residue stretch at 43-106 folds into the S4 RNA-binding domain; the sequence is LPLLLVLRDL…NESFLVVLDE (64 aa).

Belongs to the eukaryotic ribosomal protein eS4 family.

This Methanococcus aeolicus (strain ATCC BAA-1280 / DSM 17508 / OCM 812 / Nankai-3) protein is Small ribosomal subunit protein eS4.